The sequence spans 443 residues: Cell division protein FtsA (443 aa).

This sequence belongs to the FtsA/MreB family. Self-interacts. Interacts with FtsZ.

The protein resides in the cell inner membrane. Cell division protein that is involved in the assembly of the Z ring. May serve as a membrane anchor for the Z ring. This Agrobacterium fabrum (strain C58 / ATCC 33970) (Agrobacterium tumefaciens (strain C58)) protein is Cell division protein FtsA.